A 136-amino-acid polypeptide reads, in one-letter code: Small ribosomal subunit protein uS9 (136 aa).

The tract at residues 96–136 (LSPDNRKPLKTEGHLSRDPRAKERRKYGLKKARKAPQFSKR) is disordered. Positions 98–116 (PDNRKPLKTEGHLSRDPRA) are enriched in basic and acidic residues. Positions 117–136 (KERRKYGLKKARKAPQFSKR) are enriched in basic residues.

It belongs to the universal ribosomal protein uS9 family.

The chain is Small ribosomal subunit protein uS9 from Prochlorococcus marinus (strain MIT 9515).